Consider the following 1368-residue polypeptide: DNA-directed RNA polymerase subunit beta (1368 aa).

Belongs to the RNA polymerase beta chain family. As to quaternary structure, the RNAP catalytic core consists of 2 alpha, 1 beta, 1 beta' and 1 omega subunit. When a sigma factor is associated with the core the holoenzyme is formed, which can initiate transcription.

It catalyses the reaction RNA(n) + a ribonucleoside 5'-triphosphate = RNA(n+1) + diphosphate. DNA-dependent RNA polymerase catalyzes the transcription of DNA into RNA using the four ribonucleoside triphosphates as substrates. In Legionella pneumophila (strain Corby), this protein is DNA-directed RNA polymerase subunit beta.